Reading from the N-terminus, the 491-residue chain is Probable glycine dehydrogenase (decarboxylating) subunit 2 (491 aa).

Lys-264 carries the post-translational modification N6-(pyridoxal phosphate)lysine.

Belongs to the GcvP family. C-terminal subunit subfamily. The glycine cleavage system is composed of four proteins: P, T, L and H. In this organism, the P 'protein' is a heterodimer of two subunits. Requires pyridoxal 5'-phosphate as cofactor.

It carries out the reaction N(6)-[(R)-lipoyl]-L-lysyl-[glycine-cleavage complex H protein] + glycine + H(+) = N(6)-[(R)-S(8)-aminomethyldihydrolipoyl]-L-lysyl-[glycine-cleavage complex H protein] + CO2. The glycine cleavage system catalyzes the degradation of glycine. The P protein binds the alpha-amino group of glycine through its pyridoxal phosphate cofactor; CO(2) is released and the remaining methylamine moiety is then transferred to the lipoamide cofactor of the H protein. In Coxiella burnetii (strain CbuK_Q154) (Coxiella burnetii (strain Q154)), this protein is Probable glycine dehydrogenase (decarboxylating) subunit 2.